A 476-amino-acid chain; its full sequence is Ribulose bisphosphate carboxylase large chain (476 aa).

Residues 1–2 (MS) constitute a propeptide that is removed on maturation. At P3 the chain carries N-acetylproline. N6,N6,N6-trimethyllysine is present on K14. 2 residues coordinate substrate: N123 and T173. Catalysis depends on K175, which acts as the Proton acceptor. Substrate is bound at residue K177. K201, D203, and E204 together coordinate Mg(2+). Residue K201 is modified to N6-carboxylysine. Catalysis depends on H294, which acts as the Proton acceptor. R295, H327, and S379 together coordinate substrate.

It belongs to the RuBisCO large chain family. Type I subfamily. Heterohexadecamer of 8 large chains and 8 small chains; disulfide-linked. The disulfide link is formed within the large subunit homodimers. It depends on Mg(2+) as a cofactor. Post-translationally, the disulfide bond which can form in the large chain dimeric partners within the hexadecamer appears to be associated with oxidative stress and protein turnover.

The protein resides in the plastid. Its subcellular location is the chloroplast. The catalysed reaction is 2 (2R)-3-phosphoglycerate + 2 H(+) = D-ribulose 1,5-bisphosphate + CO2 + H2O. It catalyses the reaction D-ribulose 1,5-bisphosphate + O2 = 2-phosphoglycolate + (2R)-3-phosphoglycerate + 2 H(+). In terms of biological role, ruBisCO catalyzes two reactions: the carboxylation of D-ribulose 1,5-bisphosphate, the primary event in carbon dioxide fixation, as well as the oxidative fragmentation of the pentose substrate in the photorespiration process. Both reactions occur simultaneously and in competition at the same active site. The protein is Ribulose bisphosphate carboxylase large chain of Zea mays (Maize).